The sequence spans 180 residues: Peptide deformylase (180 aa).

Positions 96 and 138 each coordinate Fe cation. The active site involves glutamate 139. Histidine 142 contributes to the Fe cation binding site.

This sequence belongs to the polypeptide deformylase family. It depends on Fe(2+) as a cofactor.

The catalysed reaction is N-terminal N-formyl-L-methionyl-[peptide] + H2O = N-terminal L-methionyl-[peptide] + formate. Removes the formyl group from the N-terminal Met of newly synthesized proteins. Requires at least a dipeptide for an efficient rate of reaction. N-terminal L-methionine is a prerequisite for activity but the enzyme has broad specificity at other positions. This Rhodopseudomonas palustris (strain BisA53) protein is Peptide deformylase.